The primary structure comprises 470 residues: ESX-4 secretion system ATPase EccB4 (470 aa).

The helical transmembrane segment at 44–64 (LALGCVLAIVAAMGCAFVALL) threads the bilayer.

The protein belongs to the EccB family. In terms of assembly, part of the ESX-4 / type VII secretion system (T7SS), which is composed of cytosolic and membrane components.

The protein resides in the cell membrane. In terms of biological role, an ATPase. The protein is ESX-4 secretion system ATPase EccB4 (eccB4) of Mycobacterium tuberculosis (strain CDC 1551 / Oshkosh).